Here is a 939-residue protein sequence, read N- to C-terminus: cGMP-dependent 3',5'-cyclic phosphodiesterase (939 aa).

A lipid anchor (N-myristoyl glycine) is attached at Gly-2. 2 S-palmitoyl cysteine lipidation sites follow: Cys-5 and Cys-11. The disordered stretch occupies residues 16-38; the sequence is YPAARPAEPRGQQVFLKPDEPPP. Residue Ser-116 is modified to Phosphoserine. The interval 197-217 is disordered; that stretch reads PEAVQNTSVDASEDQKDEKGY. GAF domains follow at residues 236 to 373 and 408 to 547; these read ATSL…HYTG and DVSV…GISI. The 3',5'-cyclic GMP site is built by Ser-430, Asp-445, Ile-464, Tyr-487, and Thr-498. The 325-residue stretch at 577–901 folds into the PDEase domain; it reads SDDEYTKLLH…EHWTKVSHKF (325 aa). The Proton donor role is filled by His-655. Residues His-659, His-695, Asp-696, and Asp-807 each coordinate Zn(2+). Asp-696 lines the Mg(2+) pocket.

Belongs to the cyclic nucleotide phosphodiesterase family. PDE2 subfamily. As to quaternary structure, homodimer. Zn(2+) serves as cofactor. Requires Mg(2+) as cofactor. Expressed in brain and liver (at protein level).

It localises to the cytoplasm. It is found in the mitochondrion matrix. Its subcellular location is the mitochondrion inner membrane. The protein resides in the mitochondrion outer membrane. The protein localises to the cell membrane. It catalyses the reaction a nucleoside 3',5'-cyclic phosphate + H2O = a nucleoside 5'-phosphate + H(+). It carries out the reaction 3',5'-cyclic GMP + H2O = GMP + H(+). The catalysed reaction is 3',5'-cyclic AMP + H2O = AMP + H(+). Its activity is regulated as follows. The 3',5'-cyclic-AMP phosphodiesterase activity is stimulated by 3',5'-cyclic GMP. Specifically inhibited by Bay 60-7550. CGMP-activated cyclic nucleotide phosphodiesterase with a dual-specificity for the second messengers cAMP and cGMP, which are key regulators of many important physiological processes. Has a higher efficiency with cGMP compared to cAMP. Plays a role in cell growth and migration. Functionally, regulates mitochondrial cAMP levels and respiration. Involved in the regulation of mitochondria morphology/dynamics and apoptotic cell death via local modulation of cAMP/PKA signaling in the mitochondrion, including the monitoring of local cAMP levels at the outer mitochondrial membrane and of PKA-dependent phosphorylation of DNM1L. This chain is cGMP-dependent 3',5'-cyclic phosphodiesterase, found in Mus musculus (Mouse).